A 179-amino-acid chain; its full sequence is Adenine phosphoribosyltransferase (179 aa).

Belongs to the purine/pyrimidine phosphoribosyltransferase family. Homodimer.

Its subcellular location is the cytoplasm. It catalyses the reaction AMP + diphosphate = 5-phospho-alpha-D-ribose 1-diphosphate + adenine. It participates in purine metabolism; AMP biosynthesis via salvage pathway; AMP from adenine: step 1/1. Catalyzes a salvage reaction resulting in the formation of AMP, that is energically less costly than de novo synthesis. The protein is Adenine phosphoribosyltransferase of Dinoroseobacter shibae (strain DSM 16493 / NCIMB 14021 / DFL 12).